We begin with the raw amino-acid sequence, 338 residues long: Acyl-CoA Delta(11) desaturase (338 aa).

2 consecutive transmembrane segments (helical) span residues 33-53 (IVYFNIITFAYWHIAGLYGLY) and 61-81 (WATVLFSFFLFVVAEVGVTAG). Positions 83 to 88 (HRLWSH) match the Histidine box-1 motif. The helical transmembrane segment at 97–117 (LQILLMVMNSLAFQNTVIDWV) threads the bilayer. A Histidine box-2 motif is present at residues 120–124 (HRLHH). 2 helical membrane passes run 181–201 (AIPFIGAVCFVLPTLIPVYGW) and 212–234 (AMLRYIMNLNVTFLVNSAAHIYG). Residues 260–264 (HNYHH) carry the Histidine box-3 motif. Residues 318 to 338 (TNLWGLEDVDTPEDLKNTKGE) form a disordered region.

This sequence belongs to the fatty acid desaturase type 1 family. Fe cation is required as a cofactor. In terms of tissue distribution, detected in the pheromone gland.

Its subcellular location is the membrane. The catalysed reaction is an 11,12-saturated fatty acyl-CoA + 2 Fe(II)-[cytochrome b5] + O2 + 2 H(+) = an (11Z)-Delta(11)-fatty acyl-CoA + 2 Fe(III)-[cytochrome b5] + 2 H2O. Functionally, catalyzes the formation of delta(11) fatty acyl precursors in the pheromone gland, and has high activity towards palmitic acid and stearic acid. The polypeptide is Acyl-CoA Delta(11) desaturase (Spodoptera littoralis (Egyptian cotton leafworm)).